The sequence spans 359 residues: 4-hydroxy-2-oxovalerate aldolase 1 (359 aa).

Residues 23 to 275 enclose the Pyruvate carboxyltransferase domain; the sequence is VRVTDTSLRD…KTGIDFFDIA (253 aa). 31 to 32 lines the substrate pocket; sequence RD. Residue aspartate 32 coordinates Mn(2+). Histidine 35 acts as the Proton acceptor in catalysis. Serine 185 and histidine 214 together coordinate substrate. The Mn(2+) site is built by histidine 214 and histidine 216. Tyrosine 305 is a substrate binding site.

The protein belongs to the 4-hydroxy-2-oxovalerate aldolase family.

The enzyme catalyses (S)-4-hydroxy-2-oxopentanoate = acetaldehyde + pyruvate. This Mycobacteroides abscessus (strain ATCC 19977 / DSM 44196 / CCUG 20993 / CIP 104536 / JCM 13569 / NCTC 13031 / TMC 1543 / L948) (Mycobacterium abscessus) protein is 4-hydroxy-2-oxovalerate aldolase 1.